The sequence spans 177 residues: Large ribosomal subunit protein eL20 (177 aa).

The protein belongs to the eukaryotic ribosomal protein eL20 family.

The chain is Large ribosomal subunit protein eL20 (RpL18A) from Spodoptera frugiperda (Fall armyworm).